The chain runs to 834 residues: Structure-specific endonuclease subunit SLX4 (834 aa).

6 disordered regions span residues 80–105 (RVPRNNPVTGPSKEHKQRTRSPKTTT), 272–307 (TVPAIPTPTESSTTEDVQGSSSKQQRVKAKKPQKGK), 332–372 (QNVA…GRPV), 401–421 (GYPEYPCDETQDTQNSPSNSA), 603–649 (ESKP…AKAL), and 720–740 (ATPNARRSRQGSSSASFSIEP). A compositionally biased stretch (polar residues) spans 279–295 (PTESSTTEDVQGSSSKQ). A compositionally biased stretch (basic residues) spans 296–305 (QRVKAKKPQK). 2 stretches are compositionally biased toward polar residues: residues 345 to 366 (SNRPSGTKHSNSGRGKSSTLKN) and 412 to 421 (DTQNSPSNSA). Positions 611-630 (DDARKNGFRKENHSDVRVRP) are enriched in basic and acidic residues. Residues 729–740 (QGSSSASFSIEP) are compositionally biased toward low complexity.

This sequence belongs to the SLX4 family. In terms of assembly, forms a heterodimer with SLX1. Post-translationally, phosphorylated in response to DNA damage.

It localises to the nucleus. Its function is as follows. Regulatory subunit of the SLX1-SLX4 structure-specific endonuclease that resolves DNA secondary structures generated during DNA repair and recombination. Has endonuclease activity towards branched DNA substrates, introducing single-strand cuts in duplex DNA close to junctions with ss-DNA. This chain is Structure-specific endonuclease subunit SLX4, found in Ajellomyces capsulatus (strain NAm1 / WU24) (Darling's disease fungus).